A 447-amino-acid polypeptide reads, in one-letter code: BAG family molecular chaperone regulator 5 (447 aa).

BAG domains are found at residues 9-86 (SISR…EQNA), 95-167 (QNIF…ENCM), 182-260 (SVAK…DLEE), 275-350 (SILK…DLKE), and 365-442 (SHKA…DLKS).

Binds to the ATPase domain of HSP/HSP70 chaperones. Binds PRKN. Interacts complex with HSPA8 and JPH2.

Functionally, co-chaperone for HSP/HSP70 proteins. It functions as a nucleotide-exchange factor promoting the release of ADP from HSP70, thereby activating Hsp70-mediated protein refolding. Has an essential role in maintaining proteostasis at junctional membrane complexes (JMC), where it may function as a scaffold between the HSPA8 chaperone and JMC proteins enabling correct, HSPA8-dependent JMC protein folding. Inhibits both auto-ubiquitination of PRKN and ubiquitination of target proteins by PRKN. This is BAG family molecular chaperone regulator 5 (BAG5) from Bos taurus (Bovine).